The following is a 158-amino-acid chain: Rhombotin-2 (158 aa).

LIM zinc-binding domains lie at Cys30–Gly89 and Cys94–Lys153.

Interacts via its LIM domains with ELF2 and LDB1. Also interacts with basic helix-loop-helix protein TAL1/SCL and can assemble in a complex with LMO2 and TAL1/SCL. Interacts with BEX2 and KDM5A.

Its subcellular location is the nucleus. Its function is as follows. Acts with TAL1/SCL to regulate red blood cell development. Also acts with LDB1 to maintain erythroid precursors in an immature state. The polypeptide is Rhombotin-2 (LMO2) (Homo sapiens (Human)).